We begin with the raw amino-acid sequence, 609 residues long: CTTNBP2 N-terminal-like protein (609 aa).

Residues 1-10 (MEQNSNSSVA) are compositionally biased toward polar residues. The interval 1–29 (MEQNSNSSVADTFAEAPATDADYGTENCS) is disordered. Coiled-coil stretches lie at residues 182–264 (RMVN…QKQI) and 303–370 (IAEG…QQLG). The disordered stretch occupies residues 556 to 584 (PPAGARGAPPPIPTKPIVPPKREPSLSRL). Residues 563–574 (APPPIPTKPIVP) are compositionally biased toward pro residues. S586 bears the Phosphoserine mark.

Its subcellular location is the cell projection. It localises to the lamellipodium. The protein localises to the cytoplasm. The protein resides in the cytoskeleton. It is found in the stress fiber. Its function is as follows. Regulates lamellipodial actin dynamics in a Cortactin-dependent manner and is therefore likely involved in controlling actin branch density, actin-retrograde flow rates and lamellipodial protrusion. Functions by slowing the dissociation of Cortactin from Arp2/3 nucleated branches thereby increasing branch nucleation and junction stability. Associates with core striatin-interacting phosphatase and kinase (STRIPAK) complex to form CTTNBP2NL-STRIPAK complexes. STRIPAK complexes have critical roles in protein (de)phosphorylation and are regulators of multiple signaling pathways including Hippo, MAPK, nuclear receptor and cytoskeleton remodeling. Different types of STRIPAK complexes are involved in a variety of biological processes such as cell growth, differentiation, apoptosis, metabolism and immune regulation. The chain is CTTNBP2 N-terminal-like protein from Drosophila melanogaster (Fruit fly).